Reading from the N-terminus, the 456-residue chain is Dual-specificity RNA methyltransferase RlmN (456 aa).

The tract at residues 1 to 21 is disordered; sequence MIQRHLGQPRLIQNGGDAGGV. Glu175 (proton acceptor) is an active-site residue. Residues 183–416 form the Radical SAM core domain; that stretch reads DEERGAVCIS…QDAGYSAPIR (234 aa). Residues Cys190 and Cys427 are joined by a disulfide bond. The [4Fe-4S] cluster site is built by Cys197, Cys201, and Cys204. S-adenosyl-L-methionine is bound by residues 253–254, Ser285, 307–309, and Asn384; these read GE and SLH. The S-methylcysteine intermediate role is filled by Cys427.

Belongs to the radical SAM superfamily. RlmN family. The cofactor is [4Fe-4S] cluster.

The protein resides in the cytoplasm. It carries out the reaction adenosine(2503) in 23S rRNA + 2 reduced [2Fe-2S]-[ferredoxin] + 2 S-adenosyl-L-methionine = 2-methyladenosine(2503) in 23S rRNA + 5'-deoxyadenosine + L-methionine + 2 oxidized [2Fe-2S]-[ferredoxin] + S-adenosyl-L-homocysteine. The catalysed reaction is adenosine(37) in tRNA + 2 reduced [2Fe-2S]-[ferredoxin] + 2 S-adenosyl-L-methionine = 2-methyladenosine(37) in tRNA + 5'-deoxyadenosine + L-methionine + 2 oxidized [2Fe-2S]-[ferredoxin] + S-adenosyl-L-homocysteine. Specifically methylates position 2 of adenine 2503 in 23S rRNA and position 2 of adenine 37 in tRNAs. m2A2503 modification seems to play a crucial role in the proofreading step occurring at the peptidyl transferase center and thus would serve to optimize ribosomal fidelity. This chain is Dual-specificity RNA methyltransferase RlmN, found in Paramagnetospirillum magneticum (strain ATCC 700264 / AMB-1) (Magnetospirillum magneticum).